The chain runs to 555 residues: Exodeoxyribonuclease 7 large subunit (555 aa).

This sequence belongs to the XseA family. As to quaternary structure, heterooligomer composed of large and small subunits.

It is found in the cytoplasm. The enzyme catalyses Exonucleolytic cleavage in either 5'- to 3'- or 3'- to 5'-direction to yield nucleoside 5'-phosphates.. Functionally, bidirectionally degrades single-stranded DNA into large acid-insoluble oligonucleotides, which are then degraded further into small acid-soluble oligonucleotides. This is Exodeoxyribonuclease 7 large subunit from Chlamydia felis (strain Fe/C-56) (Chlamydophila felis).